An 871-amino-acid chain; its full sequence is MSAKGVSEKEHSPMMRQYLDVKDRYPDYLLLFRVGDFYETFFDDAREVAAALNIVLTRRSNEIPMAGFPHHASEGYIAKLVKKGYKVAVCDQVEDPAVAKGIVRREITDIITPGVTYSDSILDDRHNNYLCAIVFLRVGRQTVCGAAFIDVTTGEFRIAGLLPEDASVFLRSLHPAELLVSAADRERSETLRHALPAGTAFTVLDEWLFREEQAGEILARQFRTHSLKGFGIHDNPAGQVAAGVILHYLEETRQSSLQYITRITPLQSGDYMTLDLQTKRNLEIISSMQDGSINGSLLQVIDRTRNPMGARLLRQWLQRPLLRAADITMRLDAVDELKKMKPFRESVCCDLGQISDLERALARIATLRAIPREVRQLGSALAVIPLLKQSFQDTVSKRLCSIADALMPLPDLVAMIESAVDPEAGASMRDGGYIRKGYHQELDDLRQTASTAKERLLEIQQEERERTAIGSLKVQFNRVFGYYIEISKANRDKVPPYYEKKQTLVNAERFTIPALKEYEEKILNAEERSLVLEQQLFQALCCRIAGHAEVIQENAALIAEIDCLAAYAVCADEYGYCKPLIAEHTGLRILNGRHPVLERILPADEPYIANDALFDDRQKMLMITGPNMAGKSSYLRQTGLIVLLAQAGCFVPAEQAEIGVVDRIFTRVGASDNLASGESTFLVEMNEAADILNNATAKSLLLLDEIGRGTSTYDGLAIAWSMCEYIHRQIGARTLFATHYHELAELEGLLPGVVNYNASVLESGDRVIFLRKIVRGASDNSYGIEVARMSGMPSAVITRAKAILAGMEKRDIATPSSSGLSLQSMQISLFDEIDTRLRTAIEVIDIDRMTPLDALVELKKLQGLVRTGNII.

An ATP-binding site is contributed by 625–632 (GPNMAGKS).

It belongs to the DNA mismatch repair MutS family.

Its function is as follows. This protein is involved in the repair of mismatches in DNA. It is possible that it carries out the mismatch recognition step. This protein has a weak ATPase activity. The polypeptide is DNA mismatch repair protein MutS (Chlorobium limicola (strain DSM 245 / NBRC 103803 / 6330)).